Consider the following 356-residue polypeptide: L-amino acid-D/L-Glu epimerase (356 aa).

Substrate-binding positions include Arg25, Ser136, and 161 to 163; that span reads KVK. A Mg(2+)-binding site is contributed by Asp191. Position 193 (Asn193) interacts with substrate. Residues Glu219 and Asp244 each coordinate Mg(2+). Residues Lys268, 296 to 298, and 320 to 322 each bind substrate; these read CMM and DLD.

The protein belongs to the mandelate racemase/muconate lactonizing enzyme family. Requires Mg(2+) as cofactor.

In terms of biological role, catalyzes the epimerization of dipeptides with L-Glu in the second position. Has epimerase activity with L-Ala-L-Glu, L-Pro-L-Glu, L-Val-L-Glu, L-Thr-L-Glu and L-Met-L-Glu (in vitro). The polypeptide is L-amino acid-D/L-Glu epimerase (Francisella philomiragia subsp. philomiragia (strain ATCC 25017 / CCUG 19701 / FSC 153 / O#319-036)).